Consider the following 312-residue polypeptide: Methionyl-tRNA formyltransferase (312 aa).

A (6S)-5,6,7,8-tetrahydrofolate-binding site is contributed by S117–P120.

Belongs to the Fmt family.

It catalyses the reaction L-methionyl-tRNA(fMet) + (6R)-10-formyltetrahydrofolate = N-formyl-L-methionyl-tRNA(fMet) + (6S)-5,6,7,8-tetrahydrofolate + H(+). Attaches a formyl group to the free amino group of methionyl-tRNA(fMet). The formyl group appears to play a dual role in the initiator identity of N-formylmethionyl-tRNA by promoting its recognition by IF2 and preventing the misappropriation of this tRNA by the elongation apparatus. The protein is Methionyl-tRNA formyltransferase of Bordetella parapertussis (strain 12822 / ATCC BAA-587 / NCTC 13253).